Reading from the N-terminus, the 590-residue chain is Leucine-rich repeat transmembrane neuronal protein 4 (590 aa).

The signal sequence occupies residues 1–30 (MGFHLITQLKGMSVVLVLLPTLLLVMLTGA). The region spanning 31–61 (QRACPKNCRCDGKIVYCESHAFADIPENISG) is the LRRNT domain. Topologically, residues 31-424 (QRACPKNCRC…QEYEHVSFHK (394 aa)) are extracellular. A glycan (N-linked (GlcNAc...) asparagine) is linked at N58. LRR repeat units lie at residues 62 to 83 (GSQGLSLRFNSIQKLKSNQFAG), 86 to 107 (QLIWLYLDHNYISSVDEDAFQG), 110 to 131 (RLKELILSSNKITYLHNKTFHP), 134 to 155 (NLRNLDLSYNKLQTLQSEQFKG), 158 to 179 (KLIILHLRSNSLKTVPIRVFQD), 182 to 203 (NLDFLDLGYNRLRSLSRNAFAG), 206 to 226 (KLKELHLEHNQFSKINFAHFP), 230 to 251 (NLRSIYLQWNRIRSISQGLTWT), 254 to 275 (SLHNLDLSGNDIQGIEPGTFKC), and 278 to 299 (NLQKLNLDSNKLTNISQETVNA). N126 is a glycosylation site (N-linked (GlcNAc...) asparagine). N291 carries N-linked (GlcNAc...) asparagine glycosylation. The region spanning 311–362 (NMWECSRSICPLFYWLKNFKGNKESTMICAGPKHIQGEKVSDAVETYNICSE) is the LRRCT domain. Residues 425–445 (IIAGSVALFLSVAMILLVIYV) form a helical membrane-spanning segment. The Cytoplasmic portion of the chain corresponds to 446–590 (SWKRYPASMK…PAIYLERIAN (145 aa)).

This sequence belongs to the LRRTM family. In terms of assembly, peripherally associated with AMPAR complex. AMPAR complex consists of an inner core made of 4 pore-forming GluA/GRIA proteins (GRIA1, GRIA2, GRIA3 and GRIA4) and 4 major auxiliary subunits arranged in a twofold symmetry. One of the two pairs of distinct binding sites is occupied either by CNIH2, CNIH3 or CACNG2, CACNG3. The other harbors CACNG2, CACNG3, CACNG4, CACNG8 or GSG1L. This inner core of AMPAR complex is complemented by outer core constituents binding directly to the GluA/GRIA proteins at sites distinct from the interaction sites of the inner core constituents. Outer core constituents include at least PRRT1, PRRT2, CKAMP44/SHISA9, FRRS1L and NRN1. The proteins of the inner and outer core serve as a platform for other, more peripherally associated AMPAR constituents, including LRRTM4. Alone or in combination, these auxiliary subunits control the gating and pharmacology of the AMPAR complex and profoundly impact their biogenesis and protein processing. In terms of tissue distribution, expressed in neuronal tissues.

The protein resides in the cell membrane. It is found in the postsynaptic cell membrane. In terms of biological role, may play a role in the development and maintenance of the vertebrate nervous system. Exhibits strong synaptogenic activity, restricted to excitatory presynaptic differentiation. This Homo sapiens (Human) protein is Leucine-rich repeat transmembrane neuronal protein 4 (LRRTM4).